The following is a 124-amino-acid chain: Aspartate 1-decarboxylase (124 aa).

Serine 25 serves as the catalytic Schiff-base intermediate with substrate; via pyruvic acid. Serine 25 is subject to Pyruvic acid (Ser). Threonine 57 is a binding site for substrate. Catalysis depends on tyrosine 58, which acts as the Proton donor. 73 to 75 lines the substrate pocket; that stretch reads GAA.

It belongs to the PanD family. Heterooctamer of four alpha and four beta subunits. Pyruvate is required as a cofactor. Post-translationally, is synthesized initially as an inactive proenzyme, which is activated by self-cleavage at a specific serine bond to produce a beta-subunit with a hydroxyl group at its C-terminus and an alpha-subunit with a pyruvoyl group at its N-terminus.

It localises to the cytoplasm. It carries out the reaction L-aspartate + H(+) = beta-alanine + CO2. Its pathway is cofactor biosynthesis; (R)-pantothenate biosynthesis; beta-alanine from L-aspartate: step 1/1. In terms of biological role, catalyzes the pyruvoyl-dependent decarboxylation of aspartate to produce beta-alanine. This Clostridium beijerinckii (strain ATCC 51743 / NCIMB 8052) (Clostridium acetobutylicum) protein is Aspartate 1-decarboxylase.